Consider the following 241-residue polypeptide: Orotidine 5'-phosphate decarboxylase (241 aa).

Residues aspartate 15, lysine 36, 63 to 72 (DLKFHDIPNT), threonine 127, arginine 189, glutamine 198, glycine 218, and arginine 219 each bind substrate. The Proton donor role is filled by lysine 65.

The protein belongs to the OMP decarboxylase family. Type 1 subfamily. Homodimer.

It carries out the reaction orotidine 5'-phosphate + H(+) = UMP + CO2. It participates in pyrimidine metabolism; UMP biosynthesis via de novo pathway; UMP from orotate: step 2/2. Its function is as follows. Catalyzes the decarboxylation of orotidine 5'-monophosphate (OMP) to uridine 5'-monophosphate (UMP). This is Orotidine 5'-phosphate decarboxylase from Prochlorococcus marinus (strain MIT 9211).